Reading from the N-terminus, the 163-residue chain is Putative NOL1/NOP2/Sun domain family member 5B (163 aa).

The Nucleophile role is filled by C93.

Belongs to the class I-like SAM-binding methyltransferase superfamily. RsmB/NOP family. In terms of tissue distribution, ubiquitous.

The sequence is that of Putative NOL1/NOP2/Sun domain family member 5B (NSUN5P1) from Homo sapiens (Human).